A 206-amino-acid chain; its full sequence is Holliday junction branch migration complex subunit RuvA (206 aa).

The domain I stretch occupies residues 1 to 64; it reads MIGKLKGVLD…EDMIRLYGFR (64 aa). A domain II region spans residues 65 to 144; the sequence is TVLEREWFRL…AFAGEAAGAI (80 aa). Positions 145–154 are flexible linker; sequence GLKQDLGEGV. Positions 154–206 are domain III; the sequence is VAPAPVSDAVSALANLGYSRDIAANAVAAALKSAGEGADTGTLIRLGLKELAR.

This sequence belongs to the RuvA family. Homotetramer. Forms an RuvA(8)-RuvB(12)-Holliday junction (HJ) complex. HJ DNA is sandwiched between 2 RuvA tetramers; dsDNA enters through RuvA and exits via RuvB. An RuvB hexamer assembles on each DNA strand where it exits the tetramer. Each RuvB hexamer is contacted by two RuvA subunits (via domain III) on 2 adjacent RuvB subunits; this complex drives branch migration. In the full resolvosome a probable DNA-RuvA(4)-RuvB(12)-RuvC(2) complex forms which resolves the HJ.

Its subcellular location is the cytoplasm. The RuvA-RuvB-RuvC complex processes Holliday junction (HJ) DNA during genetic recombination and DNA repair, while the RuvA-RuvB complex plays an important role in the rescue of blocked DNA replication forks via replication fork reversal (RFR). RuvA specifically binds to HJ cruciform DNA, conferring on it an open structure. The RuvB hexamer acts as an ATP-dependent pump, pulling dsDNA into and through the RuvAB complex. HJ branch migration allows RuvC to scan DNA until it finds its consensus sequence, where it cleaves and resolves the cruciform DNA. This chain is Holliday junction branch migration complex subunit RuvA, found in Chelativorans sp. (strain BNC1).